A 131-amino-acid polypeptide reads, in one-letter code: MDATTTDATTAKRKRPAASDIADDAPTTVDEVSDAEVEEFYAILRRMRDATRRLGARPPPPRAPAWRPSFSWEDFADAPPKQAPPPPQQPADHERVAENATPPRRPAPGLDLNVEPPSDAPATPRSARAPA.

2 disordered regions span residues 1–33 (MDAT…DEVS) and 51–131 (TRRL…RAPA). The Nuclear localization signal motif lies at 12–15 (KRKR). Positions 116 to 131 (PPSDAPATPRSARAPA) are enriched in low complexity.

It belongs to the NPR1-interactor family. Interacts with NPR1/NH1. Interacts with NPR2/NH2.

The protein resides in the nucleus. Functionally, acts as a negative regulator of disease resistance. Acts on basal resistance, age-related resistance and resistance mediated by the LRR receptor kinase XA21. Plants over-expressing NRR display enhanced susceptibility to the bacterial blight Xanthomonas oryzae pv. oryzae (Xoo). The polypeptide is Protein NEGATIVE REGULATOR OF RESISTANCE (Oryza sativa subsp. indica (Rice)).